The primary structure comprises 135 residues: Large ribosomal subunit protein uL16c (135 aa).

It belongs to the universal ribosomal protein uL16 family. In terms of assembly, part of the 50S ribosomal subunit.

Its subcellular location is the plastid. It localises to the chloroplast. The polypeptide is Large ribosomal subunit protein uL16c (Phaseolus vulgaris (Kidney bean)).